The following is a 547-amino-acid chain: KsdD-like steroid dehydrogenase MSMEG_5835 (547 aa).

FAD is bound at residue 5–36; sequence DVIVVGAGLAGLVAACELVERGHSVIIVDQEN.

Belongs to the FAD-dependent oxidoreductase 2 family. Requires FAD as cofactor.

It participates in lipid metabolism; steroid biosynthesis. Functionally, able to catalyze the elimination of the C-1 and C-2 hydrogen atoms of the A-ring from the polycyclic ring structure of 3-ketosteroids, but the ketosteroid dehydrogenase activity is low compared to KsdD in the cholesterol degradation process. The low activity could be due to different substrate specificity. This chain is KsdD-like steroid dehydrogenase MSMEG_5835, found in Mycolicibacterium smegmatis (strain ATCC 700084 / mc(2)155) (Mycobacterium smegmatis).